The sequence spans 366 residues: Tetraacyldisaccharide 4'-kinase (366 aa).

62-69 (RVGGTGKT) serves as a coordination point for ATP.

It belongs to the LpxK family.

The catalysed reaction is a lipid A disaccharide + ATP = a lipid IVA + ADP + H(+). It participates in glycolipid biosynthesis; lipid IV(A) biosynthesis; lipid IV(A) from (3R)-3-hydroxytetradecanoyl-[acyl-carrier-protein] and UDP-N-acetyl-alpha-D-glucosamine: step 6/6. Transfers the gamma-phosphate of ATP to the 4'-position of a tetraacyldisaccharide 1-phosphate intermediate (termed DS-1-P) to form tetraacyldisaccharide 1,4'-bis-phosphate (lipid IVA). The sequence is that of Tetraacyldisaccharide 4'-kinase from Polynucleobacter necessarius subsp. necessarius (strain STIR1).